The primary structure comprises 504 residues: Cytochrome P450 2K4 (504 aa).

Cys-447 contacts heme.

Belongs to the cytochrome P450 family. Heme is required as a cofactor.

Its subcellular location is the endoplasmic reticulum membrane. It localises to the microsome membrane. The catalysed reaction is an organic molecule + reduced [NADPH--hemoprotein reductase] + O2 = an alcohol + oxidized [NADPH--hemoprotein reductase] + H2O + H(+). This is Cytochrome P450 2K4 (cyp2k4) from Oncorhynchus mykiss (Rainbow trout).